A 181-amino-acid polypeptide reads, in one-letter code: Ribulose bisphosphate carboxylase small subunit, chloroplastic 1 (181 aa).

The transit peptide at 1–57 (MASSIVSSAAVATRSNVAQASMVAPFTGLKSAASFPVTKKNNNVDITSLASNGGRVR) directs the protein to the chloroplast.

It belongs to the RuBisCO small chain family. Heterohexadecamer of 8 large and 8 small subunits.

The protein localises to the plastid. It localises to the chloroplast. RuBisCO catalyzes two reactions: the carboxylation of D-ribulose 1,5-bisphosphate, the primary event in carbon dioxide fixation, as well as the oxidative fragmentation of the pentose substrate. Both reactions occur simultaneously and in competition at the same active site. Although the small subunit is not catalytic it is essential for maximal activity. The polypeptide is Ribulose bisphosphate carboxylase small subunit, chloroplastic 1 (Solanum tuberosum (Potato)).